The sequence spans 588 residues: Arginine--tRNA ligase (588 aa).

Residues 129–139 carry the 'HIGH' region motif; sequence PNIAKEMHVGH.

It belongs to the class-I aminoacyl-tRNA synthetase family. In terms of assembly, monomer.

The protein localises to the cytoplasm. The enzyme catalyses tRNA(Arg) + L-arginine + ATP = L-arginyl-tRNA(Arg) + AMP + diphosphate. This Frankia casuarinae (strain DSM 45818 / CECT 9043 / HFP020203 / CcI3) protein is Arginine--tRNA ligase.